The primary structure comprises 561 residues: Arginine--tRNA ligase (561 aa).

The short motif at 129–139 (ANPTGPLHVGH) is the 'HIGH' region element.

It belongs to the class-I aminoacyl-tRNA synthetase family. In terms of assembly, monomer.

It is found in the cytoplasm. The catalysed reaction is tRNA(Arg) + L-arginine + ATP = L-arginyl-tRNA(Arg) + AMP + diphosphate. This chain is Arginine--tRNA ligase, found in Bordetella parapertussis (strain 12822 / ATCC BAA-587 / NCTC 13253).